The chain runs to 99 residues: Integration host factor subunit alpha (99 aa).

The protein belongs to the bacterial histone-like protein family. Heterodimer of an alpha and a beta chain.

This protein is one of the two subunits of integration host factor, a specific DNA-binding protein that functions in genetic recombination as well as in transcriptional and translational control. The sequence is that of Integration host factor subunit alpha from Anaeromyxobacter sp. (strain Fw109-5).